Consider the following 324-residue polypeptide: tRNA U34 carboxymethyltransferase (324 aa).

Residues Lys-91, Trp-105, Lys-110, Gly-130, Asp-152–Ser-154, Ile-181–Glu-182, Met-196, Tyr-200, and Arg-315 each bind carboxy-S-adenosyl-L-methionine.

Belongs to the class I-like SAM-binding methyltransferase superfamily. CmoB family. As to quaternary structure, homotetramer.

It carries out the reaction carboxy-S-adenosyl-L-methionine + 5-hydroxyuridine(34) in tRNA = 5-carboxymethoxyuridine(34) in tRNA + S-adenosyl-L-homocysteine + H(+). Its function is as follows. Catalyzes carboxymethyl transfer from carboxy-S-adenosyl-L-methionine (Cx-SAM) to 5-hydroxyuridine (ho5U) to form 5-carboxymethoxyuridine (cmo5U) at position 34 in tRNAs. The protein is tRNA U34 carboxymethyltransferase of Aliivibrio salmonicida (strain LFI1238) (Vibrio salmonicida (strain LFI1238)).